Reading from the N-terminus, the 33-residue chain is U-limacoditoxin(13)-As11 (33 aa).

The first 19 residues, 1–19, serve as a signal peptide directing secretion; the sequence is MFKLLLVLALTMLAQSALA. A Phenylalanine amide modification is found at Phe32.

The protein belongs to the FARP (FMRFamide related peptide) family. Expressed by the venom secretory cell of the spine. The spine is a cuticular structure containing a single large nucleated venom-secreting cell at its base. It is an independent unit capable of producing, storing and injecting venom. On the back of A.stimulea caterpillars, spines are grouped together by 50 to 100 to form scoli, of which there are eight.

The protein localises to the secreted. Functionally, is toxic when injected into Drosophila melanogaster. Also shows a low anthelmintic activity against the parasitic nematode H.contortus (drug susceptible Kirby isolate). This Acharia stimulea (Saddleback caterpillar moth) protein is U-limacoditoxin(13)-As11.